A 302-amino-acid chain; its full sequence is Glutamate/aspartate import solute-binding protein (302 aa).

The signal sequence occupies residues 1 to 22 (MQLRKLTTAMLVMGLSAGLAHA).

Belongs to the bacterial solute-binding protein 3 family. The complex is composed of two ATP-binding proteins (GltL), two transmembrane proteins (GltJ and GltK) and a solute-binding protein (GltI).

Its subcellular location is the periplasm. Functionally, part of the ABC transporter complex GltIJKL involved in glutamate and aspartate uptake. Binds to both glutamate and aspartate. This chain is Glutamate/aspartate import solute-binding protein (gltI), found in Salmonella typhimurium (strain LT2 / SGSC1412 / ATCC 700720).